Reading from the N-terminus, the 207-residue chain is Cytochrome bo(3) ubiquinol oxidase subunit 3 (207 aa).

Topologically, residues 1–26 (MSSQVMHGAAHGHDHGHDDHHHDSGQ) are cytoplasmic. The helical transmembrane segment at 27 to 47 (MTVLGFWLYLMTDCILFASLF) threads the bilayer. Over 48–70 (ATYAVLSGSFAGGPSGHDIFQLD) the chain is Periplasmic. The helical transmembrane segment at 71-91 (FVAVETLFLLLSSITFGFAML) threads the bilayer. Over 92–99 (KMFDGKKA) the chain is Cytoplasmic. A helical transmembrane segment spans residues 100–120 (GVLGWLAVTFLFGAGFIAMEI). Residues 121-141 (YEFHHLIAEGFGPQRSGFLSG) are Periplasmic-facing. Residues 142–162 (FFALVGTHGLHVTAGLIWMAI) traverse the membrane as a helical segment. The Cytoplasmic segment spans residues 163–185 (MMYQINKHGITPTAKTRMSCLSL). The chain crosses the membrane as a helical span at residues 186–206 (FWHFLDVVWICVFTVVYLLGV). Leucine 207 is a topological domain (periplasmic).

This sequence belongs to the cytochrome c oxidase subunit 3 family. As to quaternary structure, heterooctamer of two A chains, two B chains, two C chains and two D chains.

Its subcellular location is the cell inner membrane. Functionally, cytochrome bo(3) ubiquinol terminal oxidase is the component of the aerobic respiratory chain of E.coli that predominates when cells are grown at high aeration. Has proton pump activity across the membrane in addition to electron transfer, pumping 2 protons/electron. This is Cytochrome bo(3) ubiquinol oxidase subunit 3 (cyoC) from Pseudomonas putida (Arthrobacter siderocapsulatus).